Here is a 697-residue protein sequence, read N- to C-terminus: MTSSLYLSTTEARSGKSLVVLGILDLILKKTTRIAYFRPIIQDPVNGKHDNNIILVLENFRLQQTYTDSFGLYFHEAVSLASDGAIDQVLDRILAKYRHLADQVDFILCEGSDYLGEESAFEFDLNTTIAKMLNCPILLLGNAMGNTIADSLQPIDMALNSYDQESCQVVGVIINRVQPELATEIQAQLEQRYGDRPMVLGTIPQDIMLKSLRLREIVSGLNAQVLSGADLLDNLVYHHLVVAMHIAHALHWLHEKNTLIITPGDRGDIILGVMQAHRSLNYPSIAGILLTADYHPEPAIMKLIEGLPDAPPLLLTSTHTHETSARLETLHPALSPTDNYKIRHSIALFQQQIDGEKLLNYLKTIRSKGITPKLFLYNLVQAATAAQRHIVLPEGEEIRILKAAASLINHGIVRLTLLGNIEAIEQTVKINHIDLDLSKVRLINPKTSPDRERYAETYYQLRKHKGVTLAMARDILTDISYFGTMMVHLGEADGMVSGSVNTTQHTVRPALQIIKTQPGFSLVSSVFFMCLEDRVLVYGDCAVNPDPNAEQLAEIALTSAATAKNFGIEPRVALLSYSSGSSGQGADVEKVRQATAIAKEREPDLALEGPIQYDAAVDSTVAAQKMPGSAVAGKATVFIFPDLNTGNNTYKAVQRETKAIAIGPILQGLNKPVNDLSRGCLVEDIINTVVITALQVK.

Residues 374 to 697 (LFLYNLVQAA…TVVITALQVK (324 aa)) are phosphate acetyltransferase.

The protein in the N-terminal section; belongs to the CobB/CobQ family. It in the C-terminal section; belongs to the phosphate acetyltransferase and butyryltransferase family.

The protein localises to the cytoplasm. The enzyme catalyses acetyl-CoA + phosphate = acetyl phosphate + CoA. It participates in metabolic intermediate biosynthesis; acetyl-CoA biosynthesis; acetyl-CoA from acetate: step 2/2. Involved in acetate metabolism. This Synechocystis sp. (strain ATCC 27184 / PCC 6803 / Kazusa) protein is Phosphate acetyltransferase (pta).